Here is a 99-residue protein sequence, read N- to C-terminus: Ferredoxin, heterocyst (99 aa).

The 2Fe-2S ferredoxin-type domain occupies 4–96 (YQVRLINKKQ…NCTIKTHQEP (93 aa)). Positions 42, 47, 50, and 80 each coordinate [2Fe-2S] cluster.

Belongs to the 2Fe2S plant-type ferredoxin family. Requires [2Fe-2S] cluster as cofactor.

Ferredoxins are iron-sulfur proteins that transfer electrons in a wide variety of metabolic reactions. Donates electrons to the nitrogenase. The sequence is that of Ferredoxin, heterocyst (fdxH) from Nostoc sp. (strain PCC 7120 / SAG 25.82 / UTEX 2576).